The chain runs to 271 residues: Phosphate import ATP-binding protein PstB (271 aa).

The ABC transporter domain maps to 24–266 (MIGQDVSVYY…PDDPRTQDYI (243 aa)). 56-63 (GPSGCGKS) lines the ATP pocket.

This sequence belongs to the ABC transporter superfamily. Phosphate importer (TC 3.A.1.7) family. As to quaternary structure, the complex is composed of two ATP-binding proteins (PstB), two transmembrane proteins (PstC and PstA) and a solute-binding protein (PstS).

Its subcellular location is the cell inner membrane. The catalysed reaction is phosphate(out) + ATP + H2O = ADP + 2 phosphate(in) + H(+). Its function is as follows. Part of the ABC transporter complex PstSACB involved in phosphate import. Responsible for energy coupling to the transport system. The chain is Phosphate import ATP-binding protein PstB from Rhizobium etli (strain ATCC 51251 / DSM 11541 / JCM 21823 / NBRC 15573 / CFN 42).